Reading from the N-terminus, the 135-residue chain is Histone H2A.4 (135 aa).

The protein belongs to the histone H2A family. As to quaternary structure, the nucleosome is a histone octamer containing two molecules each of H2A, H2B, H3 and H4 assembled in one H3-H4 heterotetramer and two H2A-H2B heterodimers. The octamer wraps approximately 147 bp of DNA. In terms of tissue distribution, expressed preferentially in meristematic tissues of young seedlings, in stigma and ovary but not in pollen.

The protein localises to the nucleus. The protein resides in the chromosome. Functionally, core component of nucleosome. Nucleosomes wrap and compact DNA into chromatin, limiting DNA accessibility to the cellular machineries which require DNA as a template. Histones thereby play a central role in transcription regulation, DNA repair, DNA replication and chromosomal stability. DNA accessibility is regulated via a complex set of post-translational modifications of histones, also called histone code, and nucleosome remodeling. This chain is Histone H2A.4 (TH254), found in Triticum aestivum (Wheat).